Here is a 478-residue protein sequence, read N- to C-terminus: Dihydrolipoyl dehydrogenase (478 aa).

Residues Glu-36–Cys-45, Lys-54, and Ala-117 each bind FAD. Cys-45 and Cys-50 are joined by a disulfide. NAD(+) contacts are provided by residues Gly-183–Ile-187, Glu-206, Val-239, and Ala-270–Arg-273. FAD contacts are provided by Asp-313 and Ala-321. Catalysis depends on His-445, which acts as the Proton acceptor.

Belongs to the class-I pyridine nucleotide-disulfide oxidoreductase family. Homodimer. It depends on FAD as a cofactor.

The protein resides in the cytoplasm. It catalyses the reaction N(6)-[(R)-dihydrolipoyl]-L-lysyl-[protein] + NAD(+) = N(6)-[(R)-lipoyl]-L-lysyl-[protein] + NADH + H(+). Its function is as follows. Lipoamide dehydrogenase is a component of the alpha-ketoacid dehydrogenase complexes. The chain is Dihydrolipoyl dehydrogenase (lpdA) from Haemophilus influenzae (strain ATCC 51907 / DSM 11121 / KW20 / Rd).